Reading from the N-terminus, the 215-residue chain is Adenylate kinase (215 aa).

10 to 15 contributes to the ATP binding site; sequence GCGKGT. The tract at residues 30–59 is NMP; that stretch reads STGDIFRQTIDQKGPYWEELKSYISKGLLV. AMP-binding positions include T31, R36, 57 to 59, and Q91; that span reads LLV. The tract at residues 120-157 is LID; it reads GRRICSKCKRIYNIHYSAPKKEDICDDDGEFLIQRKDD. R121 provides a ligand contact to ATP. Zn(2+) contacts are provided by C124 and C127. 130–131 lines the ATP pocket; the sequence is IY. Residues C144 and D147 each coordinate Zn(2+). 2 residues coordinate AMP: R154 and R165.

It belongs to the adenylate kinase family. Monomer.

Its subcellular location is the cytoplasm. It carries out the reaction AMP + ATP = 2 ADP. The protein operates within purine metabolism; AMP biosynthesis via salvage pathway; AMP from ADP: step 1/1. Catalyzes the reversible transfer of the terminal phosphate group between ATP and AMP. Plays an important role in cellular energy homeostasis and in adenine nucleotide metabolism. The chain is Adenylate kinase from Malacoplasma penetrans (strain HF-2) (Mycoplasma penetrans).